We begin with the raw amino-acid sequence, 245 residues long: Transcription factor FUP7 (245 aa).

Positions 10–37 (CKTCRSRKQKCDGIRPACSRCRSLGLQC) form a DNA-binding region, zn(2)-C6 fungal-type. Residues 162–216 (ESSSGNADYQHEDEVQSPAGAGDDMAVGDPYRDDSVDQDSIGQPPQRTESVGNMQ) form a disordered region. Positions 199–214 (QDSIGQPPQRTESVGN) are enriched in polar residues.

It localises to the nucleus. Its function is as follows. Transcription factor; part of the gene cluster that mediates the biosynthesis of the mycotoxin fusaproliferin (FUP) that belongs to the class of bicyclic sesterterpenoids. The polypeptide is Transcription factor FUP7 (Fusarium proliferatum (strain ET1) (Orchid endophyte fungus)).